We begin with the raw amino-acid sequence, 338 residues long: Methionine synthase (338 aa).

Zn(2+) is bound by residues H211, C213, and C294.

The protein belongs to the archaeal MetE family. It depends on Zn(2+) as a cofactor.

Its pathway is amino-acid biosynthesis; L-methionine biosynthesis via de novo pathway. Catalyzes the transfer of a methyl group to L-homocysteine resulting in methionine formation. The physiological methyl donor is unknown. The protein is Methionine synthase of Sulfurisphaera tokodaii (strain DSM 16993 / JCM 10545 / NBRC 100140 / 7) (Sulfolobus tokodaii).